The chain runs to 302 residues: Heat stress transcription factor B-1 (302 aa).

A compositionally biased stretch (low complexity) spans Met1–Gln15. 2 disordered regions span residues Met1–Thr33 and Gly116–Asn184. A compositionally biased stretch (gly residues) spans Lys16–Pro28. Residues Thr123–Ser133 are compositionally biased toward polar residues. Positions Phe139 to Pro150 are enriched in pro residues. A compositionally biased stretch (low complexity) spans Ser151–Asp172. Positions Arg170–Leu202 form a coiled coil. Positions Leu180–Leu209 are hydrophobic repeat HR-A/B. The Nuclear export signal motif lies at Val211–Leu218. A Nuclear localization signal motif is present at residues Arg263–Arg267.

The protein belongs to the HSF family. Class B subfamily. As to quaternary structure, homotrimer. Post-translationally, exhibits temperature-dependent phosphorylation.

It is found in the cytoplasm. Its subcellular location is the nucleus. Functionally, transcriptional regulator that specifically binds DNA of heat shock promoter elements (HSE). This chain is Heat stress transcription factor B-1 (HSFB1), found in Oryza sativa subsp. japonica (Rice).